The primary structure comprises 347 residues: Ribosomal RNA small subunit methyltransferase C (347 aa).

It belongs to the methyltransferase superfamily. RsmC family. In terms of assembly, monomer.

Its subcellular location is the cytoplasm. The catalysed reaction is guanosine(1207) in 16S rRNA + S-adenosyl-L-methionine = N(2)-methylguanosine(1207) in 16S rRNA + S-adenosyl-L-homocysteine + H(+). Specifically methylates the guanine in position 1207 of 16S rRNA in the 30S particle. This is Ribosomal RNA small subunit methyltransferase C from Shewanella putrefaciens (strain CN-32 / ATCC BAA-453).